The following is a 111-amino-acid chain: Protein IDA-LIKE 5 (111 aa).

Residues 1-27 (MGNKRIKAMMILVVMIMMVFSWRICEA) form the signal peptide. Basic residues predominate over residues 46-56 (RRPNPRNHHHQ). Positions 46–65 (RRPNPRNHHHQNQGFNGDDY) are disordered.

As to expression, expressed mainly in flowers. Lower levels in buds and seedlings. Detected in vascular tissues and in hydathodes.

The protein localises to the secreted. It localises to the extracellular space. Its function is as follows. May be involved in floral abscission. This chain is Protein IDA-LIKE 5 (IDL5), found in Arabidopsis thaliana (Mouse-ear cress).